Consider the following 299-residue polypeptide: GTP cyclohydrolase FolE2 (299 aa).

This sequence belongs to the GTP cyclohydrolase IV family.

It carries out the reaction GTP + H2O = 7,8-dihydroneopterin 3'-triphosphate + formate + H(+). Its pathway is cofactor biosynthesis; 7,8-dihydroneopterin triphosphate biosynthesis; 7,8-dihydroneopterin triphosphate from GTP: step 1/1. Converts GTP to 7,8-dihydroneopterin triphosphate. In Klebsiella pneumoniae, this protein is GTP cyclohydrolase FolE2.